A 488-amino-acid polypeptide reads, in one-letter code: Prostaglandin E2 receptor EP4 subtype (488 aa).

Topologically, residues Met1–Ser19 are extracellular. The N-linked (GlcNAc...) asparagine glycan is linked to Asn7. Residues Pro20–Cys43 form a helical membrane-spanning segment. Over Lys44–Tyr55 the chain is Cytoplasmic. A helical transmembrane segment spans residues Thr56–Thr79. The Extracellular portion of the chain corresponds to Tyr80–Thr96. A disulfide bond links Cys92 and Cys170. A helical transmembrane segment spans residues Phe97–Ile115. Residues Glu116–Leu135 lie on the Cytoplasmic side of the membrane. Residues Ala136 to Arg160 form a helical membrane-spanning segment. Residues Ser161–Phe184 are Extracellular-facing. Residues Ser185–Leu211 form a helical membrane-spanning segment. The Cytoplasmic segment spans residues Arg212–Glu270. A helical membrane pass occupies residues Ile271–Asn298. Over Gln299–Leu315 the chain is Extracellular. A helical membrane pass occupies residues Gln316 to Leu335. The Cytoplasmic portion of the chain corresponds to Arg336 to Ile488. Residues Gly358–Ser380 form a disordered region. 4 positions are modified to phosphoserine: Ser377, Ser380, Ser382, and Ser385.

Belongs to the G-protein coupled receptor 1 family. In terms of assembly, interacts with FEM1A. Post-translationally, phosphorylation mediates agonist-mediated desensitization by promoting cytoplasmic retention.

It localises to the cell membrane. Functionally, receptor for prostaglandin E2 (PGE2). The activity of this receptor is mediated by G(s) proteins that stimulate adenylate cyclase. Has a relaxing effect on smooth muscle. May play an important role in regulating renal hemodynamics, intestinal epithelial transport, adrenal aldosterone secretion, and uterine function. This Rattus norvegicus (Rat) protein is Prostaglandin E2 receptor EP4 subtype (Ptger4).